The primary structure comprises 801 residues: DNA mismatch repair protein MutS (801 aa).

Position 590-597 (590-597 (GPNMSGKS)) interacts with ATP.

It belongs to the DNA mismatch repair MutS family.

In terms of biological role, this protein is involved in the repair of mismatches in DNA. It is possible that it carries out the mismatch recognition step. This protein has a weak ATPase activity. The chain is DNA mismatch repair protein MutS from Thermotoga neapolitana (strain ATCC 49049 / DSM 4359 / NBRC 107923 / NS-E).